Here is a 223-residue protein sequence, read N- to C-terminus: GTP cyclohydrolase 1 (223 aa).

The Zn(2+) site is built by C111, H114, and C182.

It belongs to the GTP cyclohydrolase I family. As to quaternary structure, homomer.

It carries out the reaction GTP + H2O = 7,8-dihydroneopterin 3'-triphosphate + formate + H(+). It functions in the pathway cofactor biosynthesis; 7,8-dihydroneopterin triphosphate biosynthesis; 7,8-dihydroneopterin triphosphate from GTP: step 1/1. The sequence is that of GTP cyclohydrolase 1 from Flavobacterium johnsoniae (strain ATCC 17061 / DSM 2064 / JCM 8514 / BCRC 14874 / CCUG 350202 / NBRC 14942 / NCIMB 11054 / UW101) (Cytophaga johnsonae).